Here is a 254-residue protein sequence, read N- to C-terminus: 3-deoxy-manno-octulosonate cytidylyltransferase (254 aa).

The protein belongs to the KdsB family.

Its subcellular location is the cytoplasm. The catalysed reaction is 3-deoxy-alpha-D-manno-oct-2-ulosonate + CTP = CMP-3-deoxy-beta-D-manno-octulosonate + diphosphate. Its pathway is nucleotide-sugar biosynthesis; CMP-3-deoxy-D-manno-octulosonate biosynthesis; CMP-3-deoxy-D-manno-octulosonate from 3-deoxy-D-manno-octulosonate and CTP: step 1/1. The protein operates within bacterial outer membrane biogenesis; lipopolysaccharide biosynthesis. Its function is as follows. Activates KDO (a required 8-carbon sugar) for incorporation into bacterial lipopolysaccharide in Gram-negative bacteria. This Chlamydia caviae (strain ATCC VR-813 / DSM 19441 / 03DC25 / GPIC) (Chlamydophila caviae) protein is 3-deoxy-manno-octulosonate cytidylyltransferase.